Consider the following 181-residue polypeptide: Cytochrome c oxidase subunit 2 (181 aa).

Cu cation-binding residues include C126, E128, C130, H134, and M137. E128 provides a ligand contact to Mg(2+).

It belongs to the cytochrome c oxidase subunit 2 family. In terms of assembly, component of the cytochrome c oxidase (complex IV, CIV), a multisubunit enzyme composed of a catalytic core of 3 subunits and several supernumerary subunits. The complex exists as a monomer or a dimer and forms supercomplexes (SCs) in the inner mitochondrial membrane with ubiquinol-cytochrome c oxidoreductase (cytochrome b-c1 complex, complex III, CIII). Cu cation is required as a cofactor.

The protein resides in the mitochondrion inner membrane. It carries out the reaction 4 Fe(II)-[cytochrome c] + O2 + 8 H(+)(in) = 4 Fe(III)-[cytochrome c] + 2 H2O + 4 H(+)(out). In terms of biological role, component of the cytochrome c oxidase, the last enzyme in the mitochondrial electron transport chain which drives oxidative phosphorylation. The respiratory chain contains 3 multisubunit complexes succinate dehydrogenase (complex II, CII), ubiquinol-cytochrome c oxidoreductase (cytochrome b-c1 complex, complex III, CIII) and cytochrome c oxidase (complex IV, CIV), that cooperate to transfer electrons derived from NADH and succinate to molecular oxygen, creating an electrochemical gradient over the inner membrane that drives transmembrane transport and the ATP synthase. Cytochrome c oxidase is the component of the respiratory chain that catalyzes the reduction of oxygen to water. Electrons originating from reduced cytochrome c in the intermembrane space (IMS) are transferred via the dinuclear copper A center (CU(A)) of subunit 2 and heme A of subunit 1 to the active site in subunit 1, a binuclear center (BNC) formed by heme A3 and copper B (CU(B)). The BNC reduces molecular oxygen to 2 water molecules using 4 electrons from cytochrome c in the IMS and 4 protons from the mitochondrial matrix. This is Cytochrome c oxidase subunit 2 (COII) from Paramecium primaurelia.